A 108-amino-acid polypeptide reads, in one-letter code: Class I hydrophobin 3 (108 aa).

The first 17 residues, 1 to 17, serve as a signal peptide directing secretion; sequence MFFQTTIVAALAFLAVA. Disulfide bonds link C28-C87, C35-C81, C36-C69, and C88-C101. Residue N37 is glycosylated (N-linked (GlcNAc...) asparagine).

It belongs to the fungal hydrophobin family. In terms of assembly, self-assembles to form functional amyloid fibrils called rodlets. Self-assembly into fibrillar rodlets occurs spontaneously at hydrophobic:hydrophilic interfaces and the rodlets further associate laterally to form amphipathic monolayers.

The protein localises to the secreted. The protein resides in the cell wall. Functionally, aerial growth, conidiation, and dispersal of filamentous fungi in the environment rely upon a capability of their secreting small amphipathic proteins called hydrophobins (HPBs) with low sequence identity. Class I can self-assemble into an outermost layer of rodlet bundles on aerial cell surfaces, conferring cellular hydrophobicity that supports fungal growth, development and dispersal; whereas Class II form highly ordered films at water-air interfaces through intermolecular interactions but contribute nothing to the rodlet structure. Vmh3 is a class I hydrophobin that is essential for the maintenance of the surface hydrophobicity of the mycelium and might be involved in the development of fruiting bodies. Plays an important role in hyphal resistance against environmental stress. Necessary for the efficient biodegradation of lignin. The chain is Class I hydrophobin 3 from Pleurotus ostreatus (Oyster mushroom).